Here is a 366-residue protein sequence, read N- to C-terminus: Heat-inducible transcription repressor HrcA (366 aa).

Positions 298–309 (SSGYGQSSTPSA) are enriched in polar residues. The tract at residues 298–318 (SSGYGQSSTPSANVEHEEYDT) is disordered.

The protein belongs to the HrcA family.

Its function is as follows. Negative regulator of class I heat shock genes (grpE-dnaK-dnaJ and groELS operons). Prevents heat-shock induction of these operons. This is Heat-inducible transcription repressor HrcA from Bifidobacterium animalis subsp. lactis (strain AD011).